The primary structure comprises 84 residues: Putative membrane protein insertion efficiency factor (84 aa).

The segment at 63 to 84 (LGGSGYDPPPPPKTPRKWKCEE) is disordered.

It belongs to the UPF0161 family.

The protein localises to the cell inner membrane. Functionally, could be involved in insertion of integral membrane proteins into the membrane. The protein is Putative membrane protein insertion efficiency factor of Caulobacter sp. (strain K31).